The primary structure comprises 984 residues: Hyaluronate lyase (984 aa).

Polar residues-rich tracts occupy residues 1–12, 19–32, and 54–66; these read MKQVVDNQTQNK, DFNQTNPVSGSWSH, and IQRTEQGQVSLSS. 2 disordered regions span residues 1 to 32 and 49 to 68; these read MKQVVDNQTQNKELVKNGDFNQTNPVSGSWSH and DKSPIIQRTEQGQVSLSSDK. The first 40 residues, 1–40, serve as a signal peptide directing secretion; the sequence is MKQVVDNQTQNKELVKNGDFNQTNPVSGSWSHTSAREWSA. Residues Asn429, His479, and Tyr488 contribute to the active site. Residues 701–726 show a composition bias toward basic and acidic residues; it reads TEKDAKREDTTKEFMSKHSKDAKEKT. Residues 701–728 are disordered; it reads TEKDAKREDTTKEFMSKHSKDAKEKTGQ.

It belongs to the polysaccharide lyase 8 family.

Its subcellular location is the secreted. It carries out the reaction [hyaluronan](n) = n 3-(4-deoxy-beta-D-gluc-4-enuronosyl)-N-acetyl-D-glucosamine + H2O. This Streptococcus agalactiae serotype III (strain NEM316) protein is Hyaluronate lyase.